The following is a 249-amino-acid chain: Probable transcriptional regulatory protein A1S_1496 (249 aa).

The protein belongs to the TACO1 family.

Its subcellular location is the cytoplasm. The sequence is that of Probable transcriptional regulatory protein A1S_1496 from Acinetobacter baumannii (strain ATCC 17978 / DSM 105126 / CIP 53.77 / LMG 1025 / NCDC KC755 / 5377).